Consider the following 475-residue polypeptide: Phenolic acid decarboxylase (475 aa).

3 residues coordinate Mn(2+): Asn-161, His-183, and Glu-225. Prenylated FMN contacts are provided by residues 161-166 (NVGIYR) and 182-183 (MH). Glu-274 serves as the catalytic Proton donor.

The protein belongs to the UbiD family. YclC subfamily. It depends on prenylated FMN as a cofactor. The cofactor is Mn(2+).

The enzyme catalyses 4-hydroxybenzoate + H(+) = phenol + CO2. The catalysed reaction is vanillate + H(+) = guaiacol + CO2. Involved in the non-oxidative decarboxylation and detoxification of phenolic derivatives under both aerobic and anaerobic conditions. Phenolic acid decarboxylase that catalyzes the reversible decarboxylation of 4-hydroxybenzoate and vanillate. The polypeptide is Phenolic acid decarboxylase (Escherichia coli O157:H7).